The chain runs to 329 residues: Ribosomal RNA small subunit methyltransferase H (329 aa).

Residues 39-41, D57, F84, D100, and Q107 contribute to the S-adenosyl-L-methionine site; that span reads GGY. The tract at residues 285–305 is disordered; sequence GPDKDELAQNPRSRSALLRVG.

The protein belongs to the methyltransferase superfamily. RsmH family.

The protein resides in the cytoplasm. The enzyme catalyses cytidine(1402) in 16S rRNA + S-adenosyl-L-methionine = N(4)-methylcytidine(1402) in 16S rRNA + S-adenosyl-L-homocysteine + H(+). Functionally, specifically methylates the N4 position of cytidine in position 1402 (C1402) of 16S rRNA. The polypeptide is Ribosomal RNA small subunit methyltransferase H (Ruegeria sp. (strain TM1040) (Silicibacter sp.)).